Consider the following 253-residue polypeptide: Mediator of RNA polymerase II transcription subunit 10 (253 aa).

3 disordered regions span residues Y32–S63, L88–E109, and V206–Q253. Positions T34–S47 are enriched in low complexity. Residues S50–H60 are compositionally biased toward gly residues. Over residues L88–G104 the composition is skewed to low complexity. Positions S231–Q253 are enriched in gly residues.

The protein belongs to the Mediator complex subunit 10 family. Component of the Mediator complex.

Its subcellular location is the nucleus. Functionally, component of the Mediator complex, a coactivator involved in the regulated transcription of nearly all RNA polymerase II-dependent genes. Mediator functions as a bridge to convey information from gene-specific regulatory proteins to the basal RNA polymerase II transcription machinery. Mediator is recruited to promoters by direct interactions with regulatory proteins and serves as a scaffold for the assembly of a functional preinitiation complex with RNA polymerase II and the general transcription factors. This Neurospora crassa (strain ATCC 24698 / 74-OR23-1A / CBS 708.71 / DSM 1257 / FGSC 987) protein is Mediator of RNA polymerase II transcription subunit 10 (nut2).